A 384-amino-acid polypeptide reads, in one-letter code: 5-amino-6-(D-ribitylamino)uracil--L-tyrosine 4-hydroxyphenyl transferase 2 (384 aa).

The Radical SAM core domain maps to 53 to 286 (VSYVVNRNIY…IAISRVILHT (234 aa)). 3 residues coordinate [4Fe-4S] cluster: cysteine 67, cysteine 71, and cysteine 74.

It belongs to the radical SAM superfamily. CofH family. As to quaternary structure, consists of two subunits, CofG and CofH. The cofactor is [4Fe-4S] cluster.

The catalysed reaction is 5-amino-6-(D-ribitylamino)uracil + L-tyrosine + S-adenosyl-L-methionine = 5-amino-5-(4-hydroxybenzyl)-6-(D-ribitylimino)-5,6-dihydrouracil + 2-iminoacetate + 5'-deoxyadenosine + L-methionine + H(+). The protein operates within cofactor biosynthesis; coenzyme F0 biosynthesis. Its function is as follows. Catalyzes the radical-mediated synthesis of 5-amino-5-(4-hydroxybenzyl)-6-(D-ribitylimino)-5,6-dihydrouracil from 5-amino-6-(D-ribitylamino)uracil and L-tyrosine. This chain is 5-amino-6-(D-ribitylamino)uracil--L-tyrosine 4-hydroxyphenyl transferase 2, found in Methanosarcina barkeri (strain Fusaro / DSM 804).